An 851-amino-acid chain; its full sequence is Phosphatidylinositol 4-kinase pik1 (851 aa).

Positions 1-123 (MPSSNSGNEL…KICKRLYNRI (123 aa)) constitute a PIK helical domain. Residues S202, S219, S222, and S235 each carry the phosphoserine modification. Y236 carries the phosphotyrosine modification. The segment at 384-404 (LQDSTDNDISESESEGGDLSM) is disordered. A compositionally biased stretch (acidic residues) spans 388–399 (TDNDISESESEG). Residues 558 to 836 (YAKKERIRKS…LIQKANCSVW (279 aa)) form the PI3K/PI4K catalytic domain. Positions 564–570 (IRKSSPY) are G-loop. The tract at residues 706-714 (QLKDRHNGN) is catalytic loop. The tract at residues 725–749 (HIDFGFLLTNTPGNVGFESAPFKLT) is activation loop.

The protein belongs to the PI3/PI4-kinase family. In terms of assembly, interacts with cdc4 and cam2.

The protein resides in the golgi apparatus. It localises to the nucleus. The catalysed reaction is a 1,2-diacyl-sn-glycero-3-phospho-(1D-myo-inositol) + ATP = a 1,2-diacyl-sn-glycero-3-phospho-(1D-myo-inositol 4-phosphate) + ADP + H(+). Acts on phosphatidylinositol (PI) in the first committed step in the production of the second messenger inositol 1,4,5,-trisphosphate. PIK1 is part of a nuclear phosphoinositide cycle and could control cytokinesis through the actin cytoskeleton. The chain is Phosphatidylinositol 4-kinase pik1 (pik1) from Schizosaccharomyces pombe (strain 972 / ATCC 24843) (Fission yeast).